The sequence spans 288 residues: MRIRVPATTANLGPGFDSCGLALTLYLTLDIGAEADSWYIEHNIGGGIPHDETNVIIETALNLAPNLTPHHLVMTCDIPPARGLGSSSAAVVAGIELANTLAELNLSKEEKVRIAAEIEGHPDNVAPAVLGNWVVGAKLDGEDFYVRHLFPDCALIAFIPKAELLTSESRGVLPDTLPFKEAVQASSIANVMIAAILRNDMALAGEMMERDLWHEKYRSQLVPHLTQIRDVAKSQGAYAACLSGAGPTVLVFAPRNLANTLQTSLQTLEIDADVLLLDVEGSGAEVFR.

79–89 (PPARGLGSSSA) contributes to the ATP binding site.

The protein belongs to the GHMP kinase family. Homoserine kinase subfamily.

The protein localises to the cytoplasm. It catalyses the reaction L-homoserine + ATP = O-phospho-L-homoserine + ADP + H(+). Its pathway is amino-acid biosynthesis; L-threonine biosynthesis; L-threonine from L-aspartate: step 4/5. Its function is as follows. Catalyzes the ATP-dependent phosphorylation of L-homoserine to L-homoserine phosphate. This Listeria monocytogenes serotype 4b (strain F2365) protein is Homoserine kinase.